Here is a 487-residue protein sequence, read N- to C-terminus: Serine/threonine-protein kinase BSK7 (487 aa).

Gly2 carries the N-myristoyl glycine lipid modification. Residues 59-325 (ENIVSEHGEK…DLETPSHQLM (267 aa)) form the Protein kinase domain. ATP-binding positions include 65–73 (HGEKAPNVV) and Lys87. Asp181 serves as the catalytic Proton acceptor.

This sequence belongs to the protein kinase superfamily. Ser/Thr protein kinase family.

Its subcellular location is the cell membrane. It carries out the reaction L-seryl-[protein] + ATP = O-phospho-L-seryl-[protein] + ADP + H(+). The catalysed reaction is L-threonyl-[protein] + ATP = O-phospho-L-threonyl-[protein] + ADP + H(+). Probable serine/threonine kinase that acts as a positive regulator of brassinosteroid (BR) signaling downstream of the receptor kinase BRI1. Functions redundantly with BSK3, BSK5, BSK6 and BSK8. This is Serine/threonine-protein kinase BSK7 from Arabidopsis thaliana (Mouse-ear cress).